Here is a 168-residue protein sequence, read N- to C-terminus: G/U mismatch-specific DNA glycosylase (168 aa).

It belongs to the uracil-DNA glycosylase (UDG) superfamily. TDG/mug family. As to quaternary structure, binds DNA as a monomer.

The protein resides in the cytoplasm. It carries out the reaction Specifically hydrolyzes mismatched double-stranded DNA and polynucleotides, releasing free uracil.. In terms of biological role, excises ethenocytosine and uracil, which can arise by alkylation or deamination of cytosine, respectively, from the corresponding mispairs with guanine in ds-DNA. It is capable of hydrolyzing the carbon-nitrogen bond between the sugar-phosphate backbone of the DNA and the mispaired base. The complementary strand guanine functions in substrate recognition. Required for DNA damage lesion repair in stationary-phase cells. The chain is G/U mismatch-specific DNA glycosylase from Escherichia coli (strain SMS-3-5 / SECEC).